Here is a 201-residue protein sequence, read N- to C-terminus: 3-isopropylmalate dehydratase small subunit (201 aa).

The protein belongs to the LeuD family. LeuD type 1 subfamily. In terms of assembly, heterodimer of LeuC and LeuD.

The enzyme catalyses (2R,3S)-3-isopropylmalate = (2S)-2-isopropylmalate. It participates in amino-acid biosynthesis; L-leucine biosynthesis; L-leucine from 3-methyl-2-oxobutanoate: step 2/4. Functionally, catalyzes the isomerization between 2-isopropylmalate and 3-isopropylmalate, via the formation of 2-isopropylmaleate. This Rhodopseudomonas palustris (strain HaA2) protein is 3-isopropylmalate dehydratase small subunit.